The sequence spans 221 residues: Small ribosomal subunit protein eS8 (221 aa).

2 disordered regions span residues 1 to 41 and 128 to 169; these read MGIS…LSSN and TPAA…TLDP. The segment covering 8 to 26 has biased composition (basic residues); that stretch reads MHKRRATGGKQKAWRKKRK. Residues 146–169 show a composition bias toward basic and acidic residues; it reads EETKKSNHVTRKLEKRKEGRTLDP.

Belongs to the eukaryotic ribosomal protein eS8 family.

The chain is Small ribosomal subunit protein eS8 (RPS8) from Zea mays (Maize).